A 314-amino-acid polypeptide reads, in one-letter code: tRNA dimethylallyltransferase 2 (314 aa).

8-15 (GPTGSGKS) serves as a coordination point for ATP. Substrate is bound at residue 10 to 15 (TGSGKS).

It belongs to the IPP transferase family. Monomer. Requires Mg(2+) as cofactor.

It catalyses the reaction adenosine(37) in tRNA + dimethylallyl diphosphate = N(6)-dimethylallyladenosine(37) in tRNA + diphosphate. Functionally, catalyzes the transfer of a dimethylallyl group onto the adenine at position 37 in tRNAs that read codons beginning with uridine, leading to the formation of N6-(dimethylallyl)adenosine (i(6)A). The polypeptide is tRNA dimethylallyltransferase 2 (Mycobacterium marinum (strain ATCC BAA-535 / M)).